Reading from the N-terminus, the 341-residue chain is MATIKDVAKRANVSTTTVSHVINKTRFVAEETRNAVWAAIKELHYSPSAVARSLKVNHTKSIGLLATSSEAAYFAEIIEAVEKNCFQKGYTLILGNAWNNLEKQRAYLSMMAQKRVDGLLVMCSEYPEPLLAMLEEYRHIPMVVMDWGEAKADFTDAVIDNAFEGGYMAGRYLIERGHREIGVIPGPLERNTGAGRLAGFMKAMEEAMIKVPKSWIVQGDFEPESGYRAMQQILSQPHRPTAVFCGGDIMAMGALCAADEMGLRVPQDVSLIGYDNVRNARYFTPALTTIHQPKDSLGETAFNMLLDRIVNKREEPQSIEVHPRLIERRSVADGPFRDYRR.

In terms of domain architecture, HTH lacI-type spans 2–56 (ATIKDVAKRANVSTTTVSHVINKTRFVAEETRNAVWAAIKELHYSPSAVARSLKV). Positions 4 to 23 (IKDVAKRANVSTTTVSHVIN) form a DNA-binding region, H-T-H motif. A DNA-binding region spans residues 48–56 (SAVARSLKV). Hypoxanthine-binding residues include Tyr73, Arg190, Thr192, Phe221, and Asp275.

In terms of assembly, homodimer.

It functions in the pathway purine metabolism; purine nucleotide biosynthesis [regulation]. Is the main repressor of the genes involved in the de novo synthesis of purine nucleotides, regulating purB, purC, purEK, purF, purHD, purL, purMN and guaBA expression. PurR is allosterically activated to bind its cognate DNA by binding the purine corepressors, hypoxanthine or guanine, thereby effecting transcription repression. This is HTH-type transcriptional repressor PurR from Shigella dysenteriae serotype 1 (strain Sd197).